The following is a 216-amino-acid chain: GTP cyclohydrolase 1 (216 aa).

Zn(2+)-binding residues include Cys-109, His-112, and Cys-180.

This sequence belongs to the GTP cyclohydrolase I family. In terms of assembly, toroid-shaped homodecamer, composed of two pentamers of five dimers.

The catalysed reaction is GTP + H2O = 7,8-dihydroneopterin 3'-triphosphate + formate + H(+). It participates in cofactor biosynthesis; 7,8-dihydroneopterin triphosphate biosynthesis; 7,8-dihydroneopterin triphosphate from GTP: step 1/1. The polypeptide is GTP cyclohydrolase 1 (Wigglesworthia glossinidia brevipalpis).